The primary structure comprises 164 residues: SsrA-binding protein (164 aa).

The tract at residues lysine 141–arginine 164 is disordered. Residues lysine 145–isoleucine 158 are compositionally biased toward basic and acidic residues.

The protein belongs to the SmpB family.

Its subcellular location is the cytoplasm. In terms of biological role, required for rescue of stalled ribosomes mediated by trans-translation. Binds to transfer-messenger RNA (tmRNA), required for stable association of tmRNA with ribosomes. tmRNA and SmpB together mimic tRNA shape, replacing the anticodon stem-loop with SmpB. tmRNA is encoded by the ssrA gene; the 2 termini fold to resemble tRNA(Ala) and it encodes a 'tag peptide', a short internal open reading frame. During trans-translation Ala-aminoacylated tmRNA acts like a tRNA, entering the A-site of stalled ribosomes, displacing the stalled mRNA. The ribosome then switches to translate the ORF on the tmRNA; the nascent peptide is terminated with the 'tag peptide' encoded by the tmRNA and targeted for degradation. The ribosome is freed to recommence translation, which seems to be the essential function of trans-translation. The sequence is that of SsrA-binding protein from Prochlorococcus marinus (strain MIT 9215).